A 372-amino-acid chain; its full sequence is Peptidyl-prolyl cis-trans isomerase D (372 aa).

Positions 9 to 175 (FFDISIGGKP…KEVKIEDCGV (167 aa)) constitute a PPIase cyclophilin-type domain. TPR repeat units follow at residues 220–253 (VEAVKEIGTKQFKEKNFEVALVKYEKSSQMLKQY), 271–304 (VSLFLNIALVSLKSKNYSRTLSAATEALHADNTD), and 309–342 (AKALYRRGLAYYYTKNAEMAVTDLELATTYQPHD).

This sequence belongs to the cyclophilin-type PPIase family. PPIase D subfamily.

The protein localises to the cytoplasm. The enzyme catalyses [protein]-peptidylproline (omega=180) = [protein]-peptidylproline (omega=0). In terms of biological role, PPIases accelerate the folding of proteins. It catalyzes the cis-trans isomerization of proline imidic peptide bonds in oligopeptides. This Kluyveromyces lactis (strain ATCC 8585 / CBS 2359 / DSM 70799 / NBRC 1267 / NRRL Y-1140 / WM37) (Yeast) protein is Peptidyl-prolyl cis-trans isomerase D (CPR6).